The sequence spans 477 residues: MEAVELARKLQEEATCSICLDYFTDPVMTTCGHNFCRACIQLSWEKARGKKGRRKRKGSFPCPECREMSPQRNLLPNRLLTKVAEMAQQHPGLQKQDLCQEHHEPLKLFCQKDQSPICVVCRESREHRLHRVLPAEEAVQGYKLKLEEDMEYLREQITRTGNLQAREEQSLAEWQGKVKERRERIVLEFEKMNLYLVEEEQRLLQALETEEEETASRLRESVACLDRQGHSLELLLLQLEERSTQGPLQMLQDMKEPLSRKNNVSVQCPEVAPPTRPRTVCRVPGQIEVLRGFLEDVVPDATSAYPYLLLYESRQRRYLGSSPEGSGFCSKDRFVAYPCAVGQTAFSSGRHYWEVGMNITGDALWALGVCRDNVSRKDRVPKCPENGFWVVQLSKGTKYLSTFSALTPVMLMEPPSHMGIFLDFEAGEVSFYSVSDGSHLHTYSQATFPGPLQPFFCLGAPKSGQMVISTVTMWVKG.

The segment at 16-66 adopts an RING-type zinc-finger fold; it reads CSICLDYFTDPVMTTCGHNFCRACIQLSWEKARGKKGRRKRKGSFPCPECR. The B box-type zinc finger occupies 94–135; sequence QKQDLCQEHHEPLKLFCQKDQSPICVVCRESREHRLHRVLPA. 4 residues coordinate Zn(2+): cysteine 99, histidine 102, cysteine 121, and histidine 127. Residues 135-223 adopt a coiled-coil conformation; it reads AEEAVQGYKL…TASRLRESVA (89 aa). A B30.2/SPRY domain is found at 277-475; the sequence is PRTVCRVPGQ…MVISTVTMWV (199 aa).

Belongs to the TRIM/RBCC family. Interacts (via coiled coil) with TRIM44 (via coiled coil). Interacts with TRIM28; this interaction prevents TRIM28 activity on BCL2A1. Interacts with TRIM41; this interaction prevents TRIM41 activity on ZSCAN2. Interacts with BECN1. Interacts with NFATC3 and NFATC4; these interactions prevent NFATC3 and NFATC4 nuclear localization. In terms of processing, auto-ubiquitinated. Almost exclusively in the testis.

Its subcellular location is the cytoplasm. It localises to the lysosome. The enzyme catalyses S-ubiquitinyl-[E2 ubiquitin-conjugating enzyme]-L-cysteine + [acceptor protein]-L-lysine = [E2 ubiquitin-conjugating enzyme]-L-cysteine + N(6)-ubiquitinyl-[acceptor protein]-L-lysine.. It functions in the pathway protein modification; protein ubiquitination. Its function is as follows. E3 ubiquitin ligase that plays important roles in the regulation of neuronal apoptosis, selective autophagy or cell proliferation. Stimulates the degradation of kinetochore ZW10 interacting protein ZWINT in a proteasome-dependent manner, leading to negative regulation of cell proliferation. Inhibits autophagic degradation of diverse known targets while contributing to autophagy of midbodies. Autophagy-inhibitory activity involves MCL1, which TRIM17 assembles into complexes with the key autophagy regulator BECN1. Controls neuronal apoptosis by mediating ubiquitination and degradation of MCL1 to initiate neuronal death. In addition, regulates NFAT transcription factors NFATC3 and NFATC4 activities by preventing their nuclear localization, thus inhibiting their transcriptional activities. Decreases TRIM41-mediated degradation of ZSCAN2 thereby stimulating alpha-synuclein/SNCA transcription in neuronal cells. Prevents the E3 ubiquitin-ligase activity of TRIM28 and its interaction with anti-apoptotic BCL2A1, blocking TRIM28 from ubiquitinating BCL2A1. In Homo sapiens (Human), this protein is E3 ubiquitin-protein ligase TRIM17 (TRIM17).